A 284-amino-acid chain; its full sequence is UDP-N-acetylenolpyruvoylglucosamine reductase (284 aa).

Positions 21-180 (KIGGPARLFV…LKAAFKLKKA (160 aa)) constitute an FAD-binding PCMH-type domain. Residue Arg159 is part of the active site. Ser209 functions as the Proton donor in the catalytic mechanism. The active site involves Glu280.

The protein belongs to the MurB family. FAD is required as a cofactor.

The protein resides in the cytoplasm. It carries out the reaction UDP-N-acetyl-alpha-D-muramate + NADP(+) = UDP-N-acetyl-3-O-(1-carboxyvinyl)-alpha-D-glucosamine + NADPH + H(+). It participates in cell wall biogenesis; peptidoglycan biosynthesis. Its function is as follows. Cell wall formation. This is UDP-N-acetylenolpyruvoylglucosamine reductase from Pseudothermotoga lettingae (strain ATCC BAA-301 / DSM 14385 / NBRC 107922 / TMO) (Thermotoga lettingae).